Reading from the N-terminus, the 87-residue chain is Acyl carrier protein 3 (87 aa).

One can recognise a Carrier domain in the interval 1–79; sequence MSNPTVLDQI…DLVTYIEAAL (79 aa). Ser39 is modified (O-(pantetheine 4'-phosphoryl)serine).

This sequence belongs to the acyl carrier protein (ACP) family. In terms of processing, 4'-phosphopantetheine is transferred from CoA to a specific serine of apo-ACP by AcpS. This modification is essential for activity because fatty acids are bound in thioester linkage to the sulfhydryl of the prosthetic group.

Its subcellular location is the cytoplasm. The protein operates within lipid metabolism; fatty acid biosynthesis. Its function is as follows. Carrier of the growing fatty acid chain in fatty acid biosynthesis. In Ralstonia nicotianae (strain ATCC BAA-1114 / GMI1000) (Ralstonia solanacearum), this protein is Acyl carrier protein 3.